The chain runs to 391 residues: Phosphoprotein (391 aa).

Residues threonine 10 and threonine 16 each carry the phosphothreonine modification. The segment covering 54-65 has biased composition (polar residues); sequence QKNIQHPTASHQ. Disordered regions lie at residues 54–98 and 145–186; these read QKNI…EPLF and TSTP…RSGS. Position 69 is a phosphoserine (serine 69). Phosphothreonine is present on residues threonine 91, threonine 150, and threonine 165. Serine 188 is modified (phosphoserine). Positions 218–245 form a coiled coil; the sequence is ANEIMDLLRGMDARLQHLEQKVDKVLAQ. Residue threonine 250 is modified to Phosphothreonine. Serine 257 is subject to Phosphoserine. A phosphothreonine mark is found at threonine 258 and threonine 282. 2 positions are modified to phosphoserine: serine 292 and serine 294. The residue at position 298 (threonine 298) is a Phosphothreonine. 2 positions are modified to phosphoserine: serine 301 and serine 374. An interaction with the nucleoprotein region spans residues 343 to 391; the sequence is AGRKVMITKMITDCVANPQMKQAFEQRLAKASTEDALNDIKRDIIRNAI. A Phosphothreonine modification is found at threonine 375.

Belongs to the rubulavirus/avulavirus P protein family. As to quaternary structure, homotetramer. Interacts (via multimerization domain) with polymerase L; this interaction forms the polymerase L-P complex. Interacts (via N-terminus) with N0 (via Ncore); this interaction allows P to chaperon N0 to avoid N polymerization before encapsidation. Interacts (via C-terminus) with N-RNA template; this interaction positions the polymerase on the template for both transcription and replication. Interacts with host RPS6KB1 kinase; this interaction may play a role in the viral replication and transcription.

The protein resides in the virion. Its function is as follows. Essential cofactor of the RNA polymerase L that plays a central role in the transcription and replication by forming the polymerase complex with RNA polymerase L and recruiting L to the genomic N-RNA template for RNA synthesis. Also plays a central role in the encapsidation of nascent RNA chains by forming the encapsidation complex with the nucleocapsid protein N (N-P complex). Acts as a chaperone for newly synthesized free N protein, so-called N0, allowing encapsidation of nascent RNA chains during replication. The nucleoprotein protein N prevents excessive phosphorylation of P, which leads to down-regulation of viral transcription/ replication. Participates, together with N, in the formation of viral factories (viroplasms), which are large inclusions in the host cytoplasm where replication takes place. In Mumps virus genotype N (strain L-Zagreb vaccine) (MuV), this protein is Phosphoprotein.